The sequence spans 497 residues: MORN repeat-containing protein 1 (497 aa).

The tract at residues 1-27 (MAAAGEGTPSSRGPRRDPPRRPPRNGY) is disordered. MORN repeat units follow at residues 39–61 (YEGEWKAGRKHGHGKLLFKDGSY), 62–84 (YEGAFVDGEITGEGRRHWAWSGD), 86–108 (FSGQFVLGEPQGYGVMEYKAGGC), 109–131 (YEGEVSHGMREGHGFLVDRDGQV), 132–154 (YQGSFHDNKRHGPGQMLFQNGDK), 155–177 (YDGDWVRDRRQGHGVLRCADGST), and 178–200 (YKGQWHSDVFSGLGSMAHCSGVT). Disordered regions lie at residues 393–425 (GGRSRGGLHPRGTPPTAQEPPGGSRPEGRATEE) and 468–497 (QPPHVLEEGPEASSSWQAAHSCTPEPPAPR).

This Homo sapiens (Human) protein is MORN repeat-containing protein 1 (MORN1).